A 172-amino-acid polypeptide reads, in one-letter code: Adenine phosphoribosyltransferase (172 aa).

This sequence belongs to the purine/pyrimidine phosphoribosyltransferase family. In terms of assembly, homodimer.

Its subcellular location is the cytoplasm. The enzyme catalyses AMP + diphosphate = 5-phospho-alpha-D-ribose 1-diphosphate + adenine. Its pathway is purine metabolism; AMP biosynthesis via salvage pathway; AMP from adenine: step 1/1. In terms of biological role, catalyzes a salvage reaction resulting in the formation of AMP, that is energically less costly than de novo synthesis. This is Adenine phosphoribosyltransferase from Clostridium botulinum (strain Alaska E43 / Type E3).